A 474-amino-acid polypeptide reads, in one-letter code: Coiled-coil domain-containing protein 174 (474 aa).

2 disordered regions span residues 39–86 (GVFG…REKL) and 129–170 (GATR…PSEE). Composition is skewed to basic and acidic residues over residues 64–86 (RAEK…REKL) and 129–142 (GATR…ERDA). Residues 64-98 (RAEKDAEQKLEEQKTLDKSREKLEEKAKLYEKMTK) are a coiled coil. The span at 148–157 (NDDDDEEEFS) shows a compositional bias: acidic residues. Position 206 is a phosphoserine (Ser-206). The stretch at 276–317 (LEMLREQTTDQRIKRENIKEKRKAILEARLAKLRQKKMKKSK) forms a coiled coil. 2 disordered regions span residues 309 to 372 (RQKK…IREW) and 389 to 461 (ELRA…VTFQ). 2 stretches are compositionally biased toward basic and acidic residues: residues 316-327 (SKVDGTEEESRA) and 356-372 (IQER…IREW). Over residues 410 to 419 (RTGSLSSQPW) the composition is skewed to polar residues. Positions 430-453 (GHSSGQSQEPSSSHTSTPASESSP) are enriched in low complexity.

It localises to the nucleus. Its function is as follows. Probably involved in neuronal development. The polypeptide is Coiled-coil domain-containing protein 174 (Ccdc174) (Rattus norvegicus (Rat)).